We begin with the raw amino-acid sequence, 710 residues long: Pentatricopeptide repeat-containing protein At1g02060, chloroplastic (710 aa).

Residues 1-21 (MVSSVPKLHALFVSKSQPVLR) constitute a chloroplast transit peptide. PPR repeat units follow at residues 137-171 (QDRY…GISP), 172-202 (SVLT…MRRT), 208-242 (DSYT…HCNP), 243-277 (DVVT…ATDV), 280-314 (NVVS…GLKP), 315-351 (NAVT…TFAP), 352-386 (DACT…KLHP), 387-421 (DSAS…EVLL), 429-459 (LAAA…LMKR), 463-497 (DPPS…EFVP), 498-532 (DLET…SYLP), and 533-567 (VATT…RIRQ).

Belongs to the PPR family. P subfamily.

The protein resides in the plastid. It is found in the chloroplast. The chain is Pentatricopeptide repeat-containing protein At1g02060, chloroplastic from Arabidopsis thaliana (Mouse-ear cress).